The sequence spans 410 residues: MAVINVTSEIGKLKKVLLHRPGKELLNLTPDKLDELLFDDIPFLKMAQKEHDAFADILSKNGVEVVYLEDLAAEAVSQSAEIREKFIKQYINEADIYSEYYQKMIYDFLNAIKDPKELILKTMEGVNANEIPFKNTHSLSHYVLDSGSMVINPMPNLYFTRDPFACIGNGVSLNKMYSVTRCRETIYGEYIFDHHPEYAGKVNRFYNRYDAPSIEGGDILNIGKDVLAIGLSQRTSANAIDSIANNIFDNETSPIKTVLAFQIPAIRAFMHLDTVFTQIDFDKFTIHPGILGPLRVFEITRGTKKGELNVKQIDSTLEKVLEKYTGAGKIELIQCAGGDKIAAEREQWNDGSNTLCISPGTIVVYERNDVTNEILNKKGLKVLEMPCGELSRGRGGPRCMSMPLLREDIR.

Cys-399 (amidino-cysteine intermediate) is an active-site residue.

This sequence belongs to the arginine deiminase family.

The protein localises to the cytoplasm. The enzyme catalyses L-arginine + H2O = L-citrulline + NH4(+). The protein operates within amino-acid degradation; L-arginine degradation via ADI pathway; carbamoyl phosphate from L-arginine: step 1/2. This chain is Arginine deiminase, found in Treponema denticola (strain ATCC 35405 / DSM 14222 / CIP 103919 / JCM 8153 / KCTC 15104).